Consider the following 380-residue polypeptide: Peptide chain release factor 1-like, mitochondrial (380 aa).

A mitochondrion-targeting transit peptide spans 1-26; sequence MRSRVLWGAARWLWPRRAVGPARRPL. A coiled-coil region spans residues 63–117; sequence ELLAVIKLLNEKERELRETEHLLHDENEDLRKLAENEITLCQKEITQLKHQIILL. Residues 236 to 300 form a GGQ domain region; that stretch reads PKDLRIDTKR…LRAKLYSMHL (65 aa). The GGQ motif lies at 250–252; that stretch reads GGQ. The residue at position 252 (Gln-252) is an N5-methylglutamine.

It belongs to the prokaryotic/mitochondrial release factor family. In terms of processing, methylation of glutamine in the GGQ triplet by HEMK1 is conserved from bacteria to mammals. Expressed in skeletal muscle (at protein level).

It localises to the mitochondrion. Mitochondrial peptide chain release factor that directs the termination of translation in response to the peptide chain termination codons UAA and UAG. This is Peptide chain release factor 1-like, mitochondrial from Homo sapiens (Human).